The following is a 210-amino-acid chain: MRVKICGITQAEQGQAIAALGATALGFICVERSPRYINAQKIQPIIQTLPTTVDSIGVFANASLTDIEGVLKVAQLTAIQLHGEETPEFCTQVKQLFPHLEIIKAFRIKTSKSLVNICEYVEVIDTLLLDAYDPHQLGGTGKTLNWDLLRNFHPGRPWFLAGGLTPDNVLHALEGLSPDGIDLSSGVERSPGDKDILKVTQLLENLRKIN.

This sequence belongs to the TrpF family.

The catalysed reaction is N-(5-phospho-beta-D-ribosyl)anthranilate = 1-(2-carboxyphenylamino)-1-deoxy-D-ribulose 5-phosphate. It functions in the pathway amino-acid biosynthesis; L-tryptophan biosynthesis; L-tryptophan from chorismate: step 3/5. This Crocosphaera subtropica (strain ATCC 51142 / BH68) (Cyanothece sp. (strain ATCC 51142)) protein is N-(5'-phosphoribosyl)anthranilate isomerase.